The sequence spans 381 residues: Chymosin (381 aa).

The N-terminal stretch at 1 to 16 (MRCLVVLLAALALSQA) is a signal peptide. Positions 17-58 (SGITRIPLHKGKTLRKALKERGLLEDFLQRQQYAVSSKYSSL) are cleaved as a propeptide — activation peptide. The Peptidase A1 domain maps to 74 to 378 (YFGKIYIGTP…DRANNRVGLA (305 aa)). Residue aspartate 92 is part of the active site. The cysteines at positions 105 and 110 are disulfide-linked. A glycan (N-linked (GlcNAc...) asparagine) is linked at asparagine 158. An intrachain disulfide couples cysteine 265 to cysteine 269. Residue aspartate 274 is part of the active site. A disulfide bridge links cysteine 308 with cysteine 341. N-linked (GlcNAc...) asparagine glycosylation occurs at asparagine 349.

This sequence belongs to the peptidase A1 family.

It catalyses the reaction Broad specificity similar to that of pepsin A. Clots milk by cleavage of a single 104-Ser-Phe-|-Met-Ala-107 bond in kappa-chain of casein.. Functionally, chymosin is synthesized in the mucosa of the abomasum (fourth stomach) of young (unweaned) ruminants. The enzyme hydrolyzes casein to paracasein. The sequence is that of Chymosin from Camelus dromedarius (Dromedary).